Consider the following 613-residue polypeptide: Dihydroxy-acid dehydratase (613 aa).

Asp81 provides a ligand contact to Mg(2+). Cys122 is a binding site for [2Fe-2S] cluster. Mg(2+)-binding residues include Asp123 and Lys124. Lys124 is modified (N6-carboxylysine). Cys195 provides a ligand contact to [2Fe-2S] cluster. Residue Glu491 coordinates Mg(2+). Residue Ser517 is the Proton acceptor of the active site.

This sequence belongs to the IlvD/Edd family. As to quaternary structure, homodimer. [2Fe-2S] cluster is required as a cofactor. Mg(2+) serves as cofactor.

It catalyses the reaction (2R)-2,3-dihydroxy-3-methylbutanoate = 3-methyl-2-oxobutanoate + H2O. The catalysed reaction is (2R,3R)-2,3-dihydroxy-3-methylpentanoate = (S)-3-methyl-2-oxopentanoate + H2O. It participates in amino-acid biosynthesis; L-isoleucine biosynthesis; L-isoleucine from 2-oxobutanoate: step 3/4. The protein operates within amino-acid biosynthesis; L-valine biosynthesis; L-valine from pyruvate: step 3/4. Functionally, functions in the biosynthesis of branched-chain amino acids. Catalyzes the dehydration of (2R,3R)-2,3-dihydroxy-3-methylpentanoate (2,3-dihydroxy-3-methylvalerate) into 2-oxo-3-methylpentanoate (2-oxo-3-methylvalerate) and of (2R)-2,3-dihydroxy-3-methylbutanoate (2,3-dihydroxyisovalerate) into 2-oxo-3-methylbutanoate (2-oxoisovalerate), the penultimate precursor to L-isoleucine and L-valine, respectively. This chain is Dihydroxy-acid dehydratase, found in Photobacterium profundum (strain SS9).